The chain runs to 120 residues: Ribosome-binding factor A (120 aa).

This sequence belongs to the RbfA family. Monomer. Binds 30S ribosomal subunits, but not 50S ribosomal subunits or 70S ribosomes.

It is found in the cytoplasm. One of several proteins that assist in the late maturation steps of the functional core of the 30S ribosomal subunit. Associates with free 30S ribosomal subunits (but not with 30S subunits that are part of 70S ribosomes or polysomes). Required for efficient processing of 16S rRNA. May interact with the 5'-terminal helix region of 16S rRNA. This chain is Ribosome-binding factor A, found in Buchnera aphidicola subsp. Acyrthosiphon pisum (strain 5A).